A 121-amino-acid polypeptide reads, in one-letter code: Somatostatin-1 (121 aa).

The N-terminal stretch at 1-24 is a signal peptide; sequence MKMVSSSRLRCLLVLLLSLTASIS. A propeptide spanning residues 25-105 is cleaved from the precursor; that stretch reads CSFAGQRDSK…SGGPLLAPRE (81 aa). Residues 76 to 99 are disordered; sequence NFPLAEGGPEDAHADLERAASGGP. A disulfide bridge connects residues cysteine 110 and cysteine 121.

It belongs to the somatostatin family.

The protein localises to the secreted. Somatostatin inhibits the release of somatotropin. The protein is Somatostatin-1 (sst1) of Lophius americanus (American angler).